We begin with the raw amino-acid sequence, 214 residues long: Adenylate kinase (214 aa).

11 to 16 (GTGKGT) is a binding site for ATP. Residues 31–61 (SSGDLFRFYAKEEKTALAEEIKSYINNGLYV) form an NMP region. AMP-binding positions include S32, R37, 59-61 (LYV), 87-90 (GYPR), and Q94. An LID region spans residues 124–163 (LRRSCPQCKRIYNINSVDFKPKVANLCDLCKVELIHRKDD). R125 provides a ligand contact to ATP. C128 and C131 together coordinate Zn(2+). 134–135 (IY) contributes to the ATP binding site. Zn(2+) contacts are provided by C150 and C153. Positions 160 and 171 each coordinate AMP. ATP is bound at residue K199.

The protein belongs to the adenylate kinase family. Monomer.

Its subcellular location is the cytoplasm. It carries out the reaction AMP + ATP = 2 ADP. Its pathway is purine metabolism; AMP biosynthesis via salvage pathway; AMP from ADP: step 1/1. Its function is as follows. Catalyzes the reversible transfer of the terminal phosphate group between ATP and AMP. Plays an important role in cellular energy homeostasis and in adenine nucleotide metabolism. In Mycoplasmoides gallisepticum (strain R(low / passage 15 / clone 2)) (Mycoplasma gallisepticum), this protein is Adenylate kinase.